The sequence spans 190 residues: Signal peptidase complex subunit 3 (190 aa).

The Cytoplasmic segment spans residues 1–9; that stretch reads MFNIVTRFQ. Residues 10-32 traverse the membrane as a helical; Signal-anchor for type II membrane protein segment; it reads YAANQALTSSIIIAGIVIVSSLL. Topologically, residues 33-190 are lumenal; sequence QLYSNNAWSL…EYVDKKKEQK (158 aa).

This sequence belongs to the SPCS3 family. As to quaternary structure, component of the signal peptidase complex (SPC) composed of a catalytic subunit SEC11 and three accessory subunits SPC1, SPC2 and SPC3. The complex induces a local thinning of the ER membrane which is used to measure the length of the signal peptide (SP) h-region of protein substrates. This ensures the selectivity of the complex towards h-regions shorter than 18-20 amino acids. SPC associates with the translocon complex.

It localises to the endoplasmic reticulum membrane. Essential component of the signal peptidase complex (SPC) which catalyzes the cleavage of N-terminal signal sequences from nascent proteins as they are translocated into the lumen of the endoplasmic reticulum. Essential for the SPC catalytic activity, possibly by stabilizing and positioning the active center of the complex close to the lumenal surface. Essential for viability. This Debaryomyces hansenii (strain ATCC 36239 / CBS 767 / BCRC 21394 / JCM 1990 / NBRC 0083 / IGC 2968) (Yeast) protein is Signal peptidase complex subunit 3 (SPC3).